The sequence spans 643 residues: NAD-dependent malic enzyme, mitochondrial (643 aa).

A mitochondrion-targeting transit peptide spans 1 to 38 (PRVRSFIAHQSGITSVIRRSPDIAHRMVRSLSVSSQRN). Fumarate contacts are provided by Q116, R119, and R143. The active-site Proton donor is Y164. Residue R219 participates in (S)-malate binding. R219 contributes to the NAD(+) binding site. K237 serves as the catalytic Proton acceptor. Residues E309 and D310 each coordinate a divalent metal cation. NAD(+) contacts are provided by N313, D333, A366, A369, and N472. D333 provides a ligand contact to a divalent metal cation. 2 residues coordinate (S)-malate: N472 and N516.

It belongs to the malic enzymes family. As to quaternary structure, homotetramer. Mg(2+) serves as cofactor. Mn(2+) is required as a cofactor.

It localises to the mitochondrion matrix. The enzyme catalyses (S)-malate + NAD(+) = pyruvate + CO2 + NADH. The catalysed reaction is oxaloacetate + H(+) = pyruvate + CO2. Its activity is regulated as follows. Subject to allosteric activation by fumarate. NAD-dependent mitochondrial malic enzyme that catalyzes the oxidative decarboxylation of malate to pyruvate. This chain is NAD-dependent malic enzyme, mitochondrial, found in Ascaris suum (Pig roundworm).